A 618-amino-acid chain; its full sequence is Chaperone protein dnaK (618 aa).

The segment at 595 to 618 (SKTETTTPNKNEEDVIDASFSEEK) is disordered.

It belongs to the heat shock protein 70 family.

The protein resides in the plastid. It is found in the cyanelle. In terms of biological role, acts as a chaperone. The chain is Chaperone protein dnaK (dnaK-A) from Cyanophora paradoxa.